Consider the following 1179-residue polypeptide: Dynein axonemal assembly factor 9 (1179 aa).

In terms of assembly, interacts with ARL3.

Its function is as follows. May act as an effector for ARL3. The sequence is that of Dynein axonemal assembly factor 9 from Mus musculus (Mouse).